The primary structure comprises 133 residues: Small ribosomal subunit protein uS8 (133 aa).

The protein belongs to the universal ribosomal protein uS8 family. As to quaternary structure, part of the 30S ribosomal subunit. Contacts proteins S5 and S12.

One of the primary rRNA binding proteins, it binds directly to 16S rRNA central domain where it helps coordinate assembly of the platform of the 30S subunit. In Gloeothece citriformis (strain PCC 7424) (Cyanothece sp. (strain PCC 7424)), this protein is Small ribosomal subunit protein uS8.